A 623-amino-acid polypeptide reads, in one-letter code: tRNA uridine 5-carboxymethylaminomethyl modification enzyme MnmG (623 aa).

12-17 is a binding site for FAD; it reads GAGHAG. Residue 272-286 participates in NAD(+) binding; the sequence is GPRYCPSIEDKINRF.

The protein belongs to the MnmG family. Homodimer. Heterotetramer of two MnmE and two MnmG subunits. FAD serves as cofactor.

It localises to the cytoplasm. Functionally, NAD-binding protein involved in the addition of a carboxymethylaminomethyl (cmnm) group at the wobble position (U34) of certain tRNAs, forming tRNA-cmnm(5)s(2)U34. This chain is tRNA uridine 5-carboxymethylaminomethyl modification enzyme MnmG, found in Flavobacterium psychrophilum (strain ATCC 49511 / DSM 21280 / CIP 103535 / JIP02/86).